We begin with the raw amino-acid sequence, 260 residues long: Late transcription factor 1 (260 aa).

It belongs to the chordopoxvirinae VLTF-1 family. Interacts with the late transcription factors VLTF-2 and VLTF-3. Interacts with the late transcription elongation factor H5/VLTF-4. Interacts with itself.

Functionally, associates with RNA polymerase to initiate transcription from late gene promoters. This Vertebrata (FPV) protein is Late transcription factor 1 (VLTF1).